The chain runs to 811 residues: Exocyst complex component 6B (811 aa).

Positions 50 to 119 form a coiled coil; it reads MEKLETRIRN…LVIAMEELKQ (70 aa). Residues 260–280 form a disordered region; it reads STSPKSEQDSGILDVEDEEDD.

Belongs to the SEC15 family. The exocyst complex is composed of SEC3, SEC5, SEC6, SEC8, SEC10, SEC15, EXO70 and EXO84.

Component of the exocyst complex involved in the docking of exocytic vesicles with fusion sites on the plasma membrane. In Homo sapiens (Human), this protein is Exocyst complex component 6B (EXOC6B).